The chain runs to 372 residues: Serine protease 44 (372 aa).

Positions 1-25 (MAFQGCDCFGLLVWLLLLQTRLGKA) are cleaved as a signal peptide. At 26-351 (RMVPGTPSLS…KELSRASCWK (326 aa)) the chain is on the extracellular side. The interval 31 to 72 (TPSLSPLPSENGLDDSGVNPQERPLTGMPETSLPRKPGDSTR) is disordered. A Peptidase S1 domain is found at 112 to 345 (IVGGRPAPAR…YRDWIIKELS (234 aa)). C137 and C153 form a disulfide bridge. Active-site charge relay system residues include H152 and D197. N208 carries N-linked (GlcNAc...) asparagine glycosylation. Intrachain disulfides connect C231/C303, C262/C283, and C293/C321. Residue S297 is the Charge relay system of the active site. A helical transmembrane segment spans residues 352–372 (LSGFLVLSVCLVLHLAIVVAL).

The protein belongs to the peptidase S1 family. As to expression, testis-specific. Expressed by primary and secondary spermatocytes.

The protein localises to the membrane. The protein resides in the cytoplasm. In terms of biological role, lacks protease activity in vitro. This Mus musculus (Mouse) protein is Serine protease 44.